Consider the following 991-residue polypeptide: Integrator complex subunit 8 (991 aa).

The segment covering 1–10 (MSAEAADREA) has biased composition (basic and acidic residues). Positions 1–22 (MSAEAADREAATSSRPCTPPQT) are disordered. Residues 11-22 (ATSSRPCTPPQT) show a composition bias toward polar residues. The short motif at 24-29 (WFEFLL) is the WFEF motif element. TPR repeat units follow at residues 250 to 288 (CQGC…VSKI), 319 to 355 (SQPA…SLPD), 569 to 602 (VYIL…VTEF), and 829 to 862 (HSWL…CSDF).

The protein belongs to the Integrator subunit 8 family. Component of the Integrator complex, composed of core subunits INTS1, INTS2, INTS3, INTS4, INTS5, INTS6, INTS7, INTS8, INTS9/RC74, INTS10, INTS11/CPSF3L, INTS12, INTS13, INTS14 and INTS15. The core complex associates with protein phosphatase 2A subunits PPP2CA and PPP2R1A, to form the Integrator-PP2A (INTAC) complex.

Its subcellular location is the nucleus. The protein localises to the chromosome. Functionally, component of the integrator complex, a multiprotein complex that terminates RNA polymerase II (Pol II) transcription in the promoter-proximal region of genes. The integrator complex provides a quality checkpoint during transcription elongation by driving premature transcription termination of transcripts that are unfavorably configured for transcriptional elongation: the complex terminates transcription by (1) catalyzing dephosphorylation of the C-terminal domain (CTD) of Pol II subunit POLR2A/RPB1 and SUPT5H/SPT5, (2) degrading the exiting nascent RNA transcript via endonuclease activity and (3) promoting the release of Pol II from bound DNA. The integrator complex is also involved in terminating the synthesis of non-coding Pol II transcripts, such as enhancer RNAs (eRNAs), small nuclear RNAs (snRNAs), telomerase RNAs and long non-coding RNAs (lncRNAs). Within the integrator complex, INTS8 is required for the recruitment of protein phosphatase 2A (PP2A) to transcription pause-release checkpoint. This Xenopus laevis (African clawed frog) protein is Integrator complex subunit 8 (ints8).